A 364-amino-acid chain; its full sequence is UDP-N-acetylglucosamine--N-acetylmuramyl-(pentapeptide) pyrophosphoryl-undecaprenol N-acetylglucosamine transferase (364 aa).

Residues 10 to 12 (TGG), asparagine 123, serine 198, isoleucine 251, and glutamine 296 contribute to the UDP-N-acetyl-alpha-D-glucosamine site.

It belongs to the glycosyltransferase 28 family. MurG subfamily.

It localises to the cell membrane. The catalysed reaction is di-trans,octa-cis-undecaprenyl diphospho-N-acetyl-alpha-D-muramoyl-L-alanyl-D-glutamyl-meso-2,6-diaminopimeloyl-D-alanyl-D-alanine + UDP-N-acetyl-alpha-D-glucosamine = di-trans,octa-cis-undecaprenyl diphospho-[N-acetyl-alpha-D-glucosaminyl-(1-&gt;4)]-N-acetyl-alpha-D-muramoyl-L-alanyl-D-glutamyl-meso-2,6-diaminopimeloyl-D-alanyl-D-alanine + UDP + H(+). It participates in cell wall biogenesis; peptidoglycan biosynthesis. Functionally, cell wall formation. Catalyzes the transfer of a GlcNAc subunit on undecaprenyl-pyrophosphoryl-MurNAc-pentapeptide (lipid intermediate I) to form undecaprenyl-pyrophosphoryl-MurNAc-(pentapeptide)GlcNAc (lipid intermediate II). This is UDP-N-acetylglucosamine--N-acetylmuramyl-(pentapeptide) pyrophosphoryl-undecaprenol N-acetylglucosamine transferase from Exiguobacterium sibiricum (strain DSM 17290 / CCUG 55495 / CIP 109462 / JCM 13490 / 255-15).